The chain runs to 458 residues: Argininosuccinate lyase (458 aa).

The protein belongs to the lyase 1 family. Argininosuccinate lyase subfamily.

Its subcellular location is the cytoplasm. The catalysed reaction is 2-(N(omega)-L-arginino)succinate = fumarate + L-arginine. It functions in the pathway amino-acid biosynthesis; L-arginine biosynthesis; L-arginine from L-ornithine and carbamoyl phosphate: step 3/3. This chain is Argininosuccinate lyase, found in Actinobacillus pleuropneumoniae serotype 3 (strain JL03).